An 845-amino-acid chain; its full sequence is Cadherin-related family member 5 (845 aa).

The first 25 residues, 1 to 25 (MGSWALLWPPLLFTGLLVRPPGTMA), serve as a signal peptide directing secretion. Over 26–669 (QAQYCSVNKD…DKRFSVVDMA (644 aa)) the chain is Extracellular. Asn-44, Asn-81, Asn-140, Asn-198, Asn-297, Asn-308, and Asn-405 each carry an N-linked (GlcNAc...) asparagine glycan. Cadherin domains lie at 71 to 124 (FRIQ…APEF), 125 to 237 (PFKT…PPWF), 249 to 354 (IQAQ…PPRF), and 355 to 459 (PQRL…PPST). The segment at 452-661 (SEQEPPSTDV…SSGGGPSEDK (210 aa)) is disordered. The segment covering 506–518 (SGTTLRPPTSSTP) has biased composition (low complexity). Asn-526 carries N-linked (GlcNAc...) asparagine glycosylation. Composition is skewed to polar residues over residues 539 to 549 (TAQTPKPGTSQ), 556 to 594 (GTSTSHQPATPSGGTAQTPEPGTSQPMPPSMGTSTSHQP), and 602 to 611 (AQTPEAGTSQ). 3 repeat units span residues 540 to 570 (AQTPKPGTSQPMPPGVGTSTSHQPATPSGGT), 571 to 601 (AQTPEPGTSQPMPPSMGTSTSHQPATPGGGT), and 602 to 631 (AQTPEAGTSQPMPPGMGTSTSHQPTTPGGG). The 4 X 31 AA approximate tandem repeats stretch occupies residues 540 to 645 (AQTPKPGTSQ…PEPGTSQPMP (106 aa)). Residues 632–645 (TAQTPEPGTSQPMP) form a 4; truncated repeat. Residues 633–652 (AQTPEPGTSQPMPLSKSTPS) are compositionally biased toward low complexity. Residues 670–690 (ALGGVLGALLLLALLGLAVLV) form a helical membrane-spanning segment. At 691–845 (HKHYGPRLKC…DAPGGDDSYI (155 aa)) the chain is on the cytoplasmic side. The segment at 691-845 (HKHYGPRLKC…DAPGGDDSYI (155 aa)) is mediates interaction with USH1C and MYO7B and is required for proper localization to microvilli tips and function in microvilli organization. Residues 724–789 (ANWAPVPSPT…KERRPEGGYK (66 aa)) form a disordered region. Residues 729–762 (VPSPTHDPKPAEAPMPAEPAPPGPASPGGAPEPP) show a composition bias toward pro residues. At Ser-770 the chain carries Phosphoserine. Position 810 is a phosphothreonine (Thr-810). A disordered region spans residues 811–845 (LDVDGASDSGSGDEGEGAGRGGGPYDAPGGDDSYI). Residues Ser-817, Ser-819, and Ser-821 each carry the phosphoserine modification. Over residues 835 to 845 (YDAPGGDDSYI) the composition is skewed to low complexity.

In terms of assembly, part of the IMAC/intermicrovillar adhesion complex/intermicrovillar tip-link complex composed of ANKS4B, MYO7B, USH1C, CDHR2 and CDHR5. Interacts (via cytoplasmic domain) with USH1C and MYO7B; required for proper localization of CDHR5 to microvilli tips and its function in brush border differentiation. N- and O-glycosylated. In terms of tissue distribution, highest expression in kidney, liver, colon and small intestine. In kidney, expressed apically along brush border of proximal convoluted tubule but not in cortical collecting ducts. Isoform 1 is expressed primarily in adult small intestine and colon. Isoform 2 is highly expressed in fetal liver. Expressed in duodenum with higher expression in enterocytes along the villus axis and lower expression in crypts (at protein level).

Its subcellular location is the apical cell membrane. It localises to the cell projection. It is found in the microvillus membrane. Its function is as follows. Intermicrovillar adhesion molecule that forms, via its extracellular domain, calcium-dependent heterophilic complexes with CDHR2 on adjacent microvilli. Thereby, controls the packing of microvilli at the apical membrane of epithelial cells. Through its cytoplasmic domain, interacts with microvillus cytoplasmic proteins to form the intermicrovillar adhesion complex/IMAC. This complex plays a central role in microvilli and epithelial brush border differentiation. The protein is Cadherin-related family member 5 of Homo sapiens (Human).